Consider the following 358-residue polypeptide: Neutral protease 2 homolog PADG_00776 (358 aa).

The signal sequence occupies residues 1-19 (MRRVSGILAVAAFTISAFA). Residues 20 to 185 (GVIQPVAKDA…MNQFVKIAKL (166 aa)) constitute a propeptide that is removed on maturation. Disulfide bonds link Cys-188/Cys-259 and Cys-266/Cys-284. Asn-249 carries an N-linked (GlcNAc...) asparagine glycan. His-309 contacts Zn(2+). The active site involves Glu-310. Residues His-313 and Asp-324 each coordinate Zn(2+).

The protein belongs to the peptidase M35 family. Zn(2+) is required as a cofactor.

The protein localises to the secreted. It carries out the reaction Preferential cleavage of bonds with hydrophobic residues in P1'. Also 3-Asn-|-Gln-4 and 8-Gly-|-Ser-9 bonds in insulin B chain.. Functionally, secreted metalloproteinase that allows assimilation of proteinaceous substrates. Shows high activities on basic nuclear substrates such as histone and protamine. In Paracoccidioides brasiliensis (strain Pb18), this protein is Neutral protease 2 homolog PADG_00776.